A 277-amino-acid polypeptide reads, in one-letter code: Sulfate transport system permease protein CysT (277 aa).

7 helical membrane passes run 17–37 (LGTS…ALVM), 64–84 (LLSA…MAWI), 99–119 (LMDL…ASLF), 136–156 (VTYT…PFVV), 185–205 (FCKV…ALSF), 215–235 (VIFI…MIFV), and 243–263 (PAAS…LFSI). Residues 60-263 (YKVTLLSAFV…AASLLLLFSI (204 aa)) enclose the ABC transmembrane type-1 domain.

This sequence belongs to the binding-protein-dependent transport system permease family. CysTW subfamily. The complex is composed of two ATP-binding proteins (CysA), two transmembrane proteins (CysT and CysW) and a solute-binding protein (CysP).

It localises to the cell inner membrane. Functionally, part of the ABC transporter complex CysAWTP (TC 3.A.1.6.1) involved in sulfate/thiosulfate import. Probably responsible for the translocation of the substrate across the membrane. The polypeptide is Sulfate transport system permease protein CysT (cysU) (Escherichia coli (strain K12)).